We begin with the raw amino-acid sequence, 346 residues long: MISALLGRSKSELEEWAVAQGQPAFRGRQLHDWLYAKGVRDLQGITVLPKAWRASLQNEGVSVGRLHEQERRVSADATTKLLLGTEDGETLETVGIPTDQRLTVCVSSQVGCPMACRFCATGKGGLQRSLAGHEIVAQVLSIREVMERRPSHVVFMGMGEPLLNIEAVLESIRCLNDDLGIGQRRITVSTVGVPHTLPRLADLALKQLGRAQFTLAVSLHAPNQALREELIPTAKTYPYDALLDDCRYYLNKTGRRVSFEYILLGGVNDHPHHASELADRVGGFQSHVNLIAYNPIEEEEFQRPTTQRIEGFRRVLERRGVAVSLRASRGLDQDAACGQLRRNRRS.

Glu92 serves as the catalytic Proton acceptor. The region spanning Thr98–Asp332 is the Radical SAM core domain. An intrachain disulfide couples Cys105 to Cys337. 3 residues coordinate [4Fe-4S] cluster: Cys112, Cys116, and Cys119. Residues Gly159–Glu160, Ser189, Ser218–His220, and Asn294 contribute to the S-adenosyl-L-methionine site. Catalysis depends on Cys337, which acts as the S-methylcysteine intermediate.

This sequence belongs to the radical SAM superfamily. RlmN family. The cofactor is [4Fe-4S] cluster.

Its subcellular location is the cytoplasm. It catalyses the reaction adenosine(2503) in 23S rRNA + 2 reduced [2Fe-2S]-[ferredoxin] + 2 S-adenosyl-L-methionine = 2-methyladenosine(2503) in 23S rRNA + 5'-deoxyadenosine + L-methionine + 2 oxidized [2Fe-2S]-[ferredoxin] + S-adenosyl-L-homocysteine. It carries out the reaction adenosine(37) in tRNA + 2 reduced [2Fe-2S]-[ferredoxin] + 2 S-adenosyl-L-methionine = 2-methyladenosine(37) in tRNA + 5'-deoxyadenosine + L-methionine + 2 oxidized [2Fe-2S]-[ferredoxin] + S-adenosyl-L-homocysteine. Functionally, specifically methylates position 2 of adenine 2503 in 23S rRNA and position 2 of adenine 37 in tRNAs. This is Probable dual-specificity RNA methyltransferase RlmN from Synechococcus sp. (strain CC9311).